Here is a 184-residue protein sequence, read N- to C-terminus: Photosystem I assembly protein Ycf4 (184 aa).

The next 2 membrane-spanning stretches (helical) occupy residues 22-42 and 57-77; these read FFWAFILFLGSLGFLLVGTSS and IIFFPQGIVMSFYGIAGLFIS.

Belongs to the Ycf4 family.

The protein resides in the plastid. Its subcellular location is the chloroplast thylakoid membrane. Functionally, seems to be required for the assembly of the photosystem I complex. The chain is Photosystem I assembly protein Ycf4 from Aethionema cordifolium (Lebanon stonecress).